A 280-amino-acid chain; its full sequence is MSKEVSEEGKTHHGKDYVDPPPAPLLDMGELKSWSFYRALIAEFIATLLFLYVTVATVIGHKKQTGPCDGVGLLGIAWAFGGMIFVLVYCTAGISGGHINPAVTFGLFLARKVSLVRALGYMIAQCLGAICGVGFVKAFMKTPYNTLGGGANTVADGYSKGTALGAEIIGTFVLVYTVFSATDPKRSARDSHIPVLAPLPIGFAVFMVHLATIPITGTGINPARSFGAAVIYNNEKAWDDQWIFWVGPFLGALAAAAYHQYILRASAIKALGSFRSNATN.

Residue methionine 1 is modified to N-acetylmethionine. At 1–38 (MSKEVSEEGKTHHGKDYVDPPPAPLLDMGELKSWSFYR) the chain is on the cytoplasmic side. Residue lysine 3 is modified to N6,N6-dimethyllysine. The helical transmembrane segment at 39 to 59 (ALIAEFIATLLFLYVTVATVI) threads the bilayer. The Extracellular portion of the chain corresponds to 60-69 (GHKKQTGPCD). A helical membrane pass occupies residues 70–90 (GVGLLGIAWAFGGMIFVLVYC). Residues 91-118 (TAGISGGHINPAVTFGLFLARKVSLVRA) lie on the Cytoplasmic side of the membrane. Positions 100 to 102 (NPA) match the NPA 1 motif. Residues 119–139 (LGYMIAQCLGAICGVGFVKAF) form a helical membrane-spanning segment. Residues 140 to 160 (MKTPYNTLGGGANTVADGYSK) lie on the Extracellular side of the membrane. Residues 161 to 181 (GTALGAEIIGTFVLVYTVFSA) form a helical membrane-spanning segment. Residues 182 to 192 (TDPKRSARDSH) lie on the Cytoplasmic side of the membrane. Residues 193–213 (IPVLAPLPIGFAVFMVHLATI) traverse the membrane as a helical segment. Residues 214 to 242 (PITGTGINPARSFGAAVIYNNEKAWDDQW) lie on the Extracellular side of the membrane. The NPA 2 motif lies at 221–223 (NPA). The helical transmembrane segment at 243–263 (IFWVGPFLGALAAAAYHQYIL) threads the bilayer. At 264-280 (RASAIKALGSFRSNATN) the chain is on the cytoplasmic side. Phosphoserine is present on residues serine 273 and serine 276. Threonine 279 carries the phosphothreonine modification.

The protein belongs to the MIP/aquaporin (TC 1.A.8) family. PIP (TC 1.A.8.11) subfamily. Interacts with SYP61 and SYP121 in trafficking vesicles and at the plasma membrane. Highly expressed in flowers, expressed at low levels in siliques, and at low level in leaves and roots. Highly levels in elongating cells in both roots and shoots.

The protein localises to the cell membrane. Its function is as follows. Water channel required to facilitate the transport of water across cell membrane. May be involved in the osmoregulation in plants under high osmotic stress such as under a high salt condition. This Arabidopsis thaliana (Mouse-ear cress) protein is Aquaporin PIP2-7.